Reading from the N-terminus, the 669-residue chain is Coagulation factor XIII B chain (669 aa).

The signal sequence occupies residues 1–21 (MMTLRHLPFILLLILSGELYA). Sushi domains are found at residues 25 to 89 (QCDF…PRCY), 90 to 149 (KKCL…SCRK), 152 to 211 (ETCL…QCNK), 212 to 270 (LMCS…ICEG), 273 to 330 (NRCP…KCIE), 335 to 392 (VACE…ECVE), 395 to 453 (ENCK…VCLE), 454 to 517 (PCTI…PMCI), 523 to 581 (GMCA…SCLE), and 582 to 648 (PCTL…PKCT). 20 cysteine pairs are disulfide-bonded: cysteine 26-cysteine 77, cysteine 60-cysteine 88, cysteine 92-cysteine 136, cysteine 119-cysteine 147, cysteine 154-cysteine 198, cysteine 181-cysteine 209, cysteine 214-cysteine 256, cysteine 242-cysteine 268, cysteine 275-cysteine 317, cysteine 303-cysteine 328, cysteine 337-cysteine 379, cysteine 365-cysteine 390, cysteine 397-cysteine 440, cysteine 426-cysteine 451, cysteine 455-cysteine 506, cysteine 487-cysteine 516, cysteine 525-cysteine 568, cysteine 554-cysteine 579, cysteine 583-cysteine 637, and cysteine 617-cysteine 647. N-linked (GlcNAc...) asparagine glycosylation is present at asparagine 163. An N-linked (GlcNAc...) asparagine glycan is attached at asparagine 546.

As to quaternary structure, tetramer of two A chains (F13A1) and two B (F13B) chains. Predominantly expressed in liver and kidney.

Its subcellular location is the secreted. In terms of biological role, the B chain of factor XIII is not catalytically active, but is thought to stabilize the A subunits and regulate the rate of transglutaminase formation by thrombin. The protein is Coagulation factor XIII B chain (F13b) of Mus musculus (Mouse).